The primary structure comprises 868 residues: DNA topoisomerase 1 (868 aa).

The Toprim domain occupies 3-148 (KSLVIVESPA…RFSRVVFNEI (146 aa)). Positions 9 and 117 each coordinate Mg(2+). Positions 164-581 (NMDRVNAQQT…QFFKDFSSQL (418 aa)) constitute a Topo IA-type catalytic domain. Residues 198 to 203 (SAGRVQ) are interaction with DNA. Tyrosine 325 acts as the O-(5'-phospho-DNA)-tyrosine intermediate in catalysis. 3 C4-type zinc fingers span residues 605–636 (CPTCGRNMAIRTASTGVFLGCTGYALPPKERC), 667–694 (CTKCGTAMDSYVIDAHRKIHICGNNPNC), and 716–739 (CDKCGADMHLKLGRFGKYMGCTNC).

Belongs to the type IA topoisomerase family. Monomer. It depends on Mg(2+) as a cofactor.

The catalysed reaction is ATP-independent breakage of single-stranded DNA, followed by passage and rejoining.. Functionally, releases the supercoiling and torsional tension of DNA, which is introduced during the DNA replication and transcription, by transiently cleaving and rejoining one strand of the DNA duplex. Introduces a single-strand break via transesterification at a target site in duplex DNA. The scissile phosphodiester is attacked by the catalytic tyrosine of the enzyme, resulting in the formation of a DNA-(5'-phosphotyrosyl)-enzyme intermediate and the expulsion of a 3'-OH DNA strand. The free DNA strand then undergoes passage around the unbroken strand, thus removing DNA supercoils. Finally, in the religation step, the DNA 3'-OH attacks the covalent intermediate to expel the active-site tyrosine and restore the DNA phosphodiester backbone. The sequence is that of DNA topoisomerase 1 from Haemophilus influenzae (strain ATCC 51907 / DSM 11121 / KW20 / Rd).